A 69-amino-acid polypeptide reads, in one-letter code: MGKQCEVCGKKPQVGHHVSHSNIKTKRRFEPNLQSVRHQLPSGEVKTVTVCTRCLRSGAVTKPVVRKSA.

This sequence belongs to the bacterial ribosomal protein bL28 family.

This Nitratidesulfovibrio vulgaris (strain ATCC 29579 / DSM 644 / CCUG 34227 / NCIMB 8303 / VKM B-1760 / Hildenborough) (Desulfovibrio vulgaris) protein is Large ribosomal subunit protein bL28.